A 156-amino-acid polypeptide reads, in one-letter code: Small ribosomal subunit protein uS7 (156 aa).

The protein belongs to the universal ribosomal protein uS7 family. Part of the 30S ribosomal subunit. Contacts proteins S9 and S11.

Its function is as follows. One of the primary rRNA binding proteins, it binds directly to 16S rRNA where it nucleates assembly of the head domain of the 30S subunit. Is located at the subunit interface close to the decoding center, probably blocks exit of the E-site tRNA. In Limosilactobacillus reuteri (strain DSM 20016) (Lactobacillus reuteri), this protein is Small ribosomal subunit protein uS7.